Consider the following 276-residue polypeptide: Energy-coupling factor transporter ATP-binding protein EcfA1 (276 aa).

An ABC transporter domain is found at 2 to 237; the sequence is IEIKNLKFKY…GSELVDLGLD (236 aa). 37–44 is a binding site for ATP; it reads GHNGSGKS.

This sequence belongs to the ABC transporter superfamily. Energy-coupling factor EcfA family. Forms a stable energy-coupling factor (ECF) transporter complex composed of 2 membrane-embedded substrate-binding proteins (S component), 2 ATP-binding proteins (A component) and 2 transmembrane proteins (T component).

It is found in the cell membrane. Functionally, ATP-binding (A) component of a common energy-coupling factor (ECF) ABC-transporter complex. Unlike classic ABC transporters this ECF transporter provides the energy necessary to transport a number of different substrates. The protein is Energy-coupling factor transporter ATP-binding protein EcfA1 of Streptococcus thermophilus (strain CNRZ 1066).